The sequence spans 401 residues: MQLKALEVREITDYIKKMMDNDIILRNVRVKGEISNLKYHSTGIYFTLKDEIASLKCVMFNEYGKLLNFTLQDGMSVIVTGRISVYERNGTYQLYAQSIQSDGIGALYFAFNKLKEKLQKEGLFDSDKKKPIPKHPKKIAVVTSPTGAVIRDIITISRRRNPTVDILVVPVLVQGSSAADEICNALRILNKREDIDVIILARGGGSLEEIWPFNEEKVARCIYASRIPVVSAVGHETDFTISDFVADLRAPTPSAAAEIVVPDIKVYQRELFLLKTKLLTLMTAELNRKKKEFEGLKRALYLNSPTKKSEILRHKVENLTASLYNEMLSIYQHKRNDFLILAEKLNSLSPLKVLTRGYTIVLDKQEKVISSVKDIKPYDEIKILFKDGKAKAIVQEVKENE.

The protein belongs to the XseA family. In terms of assembly, heterooligomer composed of large and small subunits.

It localises to the cytoplasm. It carries out the reaction Exonucleolytic cleavage in either 5'- to 3'- or 3'- to 5'-direction to yield nucleoside 5'-phosphates.. In terms of biological role, bidirectionally degrades single-stranded DNA into large acid-insoluble oligonucleotides, which are then degraded further into small acid-soluble oligonucleotides. In Thermoanaerobacter pseudethanolicus (strain ATCC 33223 / 39E) (Clostridium thermohydrosulfuricum), this protein is Exodeoxyribonuclease 7 large subunit.